Here is a 237-residue protein sequence, read N- to C-terminus: Purine nucleoside phosphorylase DeoD-type (237 aa).

Position 4 (His-4) interacts with a purine D-ribonucleoside. Phosphate contacts are provided by residues Gly-20, Arg-24, Arg-43, and 87 to 90; that span reads RVGT. Residues 179–181 and 203–204 each bind a purine D-ribonucleoside; these read EME and SD. Asp-204 (proton donor) is an active-site residue.

This sequence belongs to the PNP/UDP phosphorylase family. As to quaternary structure, homohexamer; trimer of homodimers.

It catalyses the reaction a purine D-ribonucleoside + phosphate = a purine nucleobase + alpha-D-ribose 1-phosphate. It carries out the reaction a purine 2'-deoxy-D-ribonucleoside + phosphate = a purine nucleobase + 2-deoxy-alpha-D-ribose 1-phosphate. In terms of biological role, catalyzes the reversible phosphorolytic breakdown of the N-glycosidic bond in the beta-(deoxy)ribonucleoside molecules, with the formation of the corresponding free purine bases and pentose-1-phosphate. This is Purine nucleoside phosphorylase DeoD-type from Streptococcus uberis (strain ATCC BAA-854 / 0140J).